The primary structure comprises 310 residues: Junctional adhesion molecule C (310 aa).

The N-terminal stretch at 1-31 is a signal peptide; that stretch reads MALRRPPRLRLCARLPDFFLLLLFRGCLIGA. Topologically, residues 32–241 are extracellular; it reads VNLKSSNRTP…EQEMEVYDLN (210 aa). Residues 35–127 enclose the Ig-like V-type domain; that stretch reads KSSNRTPVVQ…VARNDRKEID (93 aa). 2 disulfides stabilise this stretch: Cys-53–Cys-115 and Cys-160–Cys-219. Asn-104 and Asn-192 each carry an N-linked (GlcNAc...) asparagine glycan. The Ig-like C2-type domain occupies 139–236; that stretch reads PVTPVCRVPK…SARCEEQEME (98 aa). The chain crosses the membrane as a helical span at residues 242–262; the sequence is IGGIIGGVLVVLAVLALITLG. At 263 to 310 the chain is on the cytoplasmic side; the sequence is ICCAYRRGYFINNKQDGESYKNPGKPDGVNYIRTDEEGDFRHKSSFVI. 2 S-palmitoyl cysteine lipidation sites follow: Cys-264 and Cys-265.

The protein belongs to the immunoglobulin superfamily. As to quaternary structure, interacts with ITGAM. Interacts with GORASP2. In terms of processing, proteolytically cleaved from endothelial cells surface into a soluble form by ADAM10 and ADAM17; the release of soluble JAM3 is increased by pro-inflammatory factors. S-palmitoylated by ZDHHC7. S-palmitoylation promotes expression at tight junctions. Detected on round and elongated spermatids (at protein level). Highest expression in placenta, brain and kidney. Significant expression is detected on platelets. Expressed in intestinal mucosa cells. Expressed in the vascular endothelium. Found in serum (at protein level). Also detected in the synovial fluid of patients with rheumatoid arthritis, psoriatic arthritis or ostearthritis (at protein level).

The protein resides in the cell membrane. Its subcellular location is the cell junction. The protein localises to the desmosome. It is found in the tight junction. It localises to the secreted. Junctional adhesion protein that mediates heterotypic cell-cell interactions with its cognate receptor JAM2 to regulate different cellular processes. Plays a role in homing and mobilization of hematopoietic stem and progenitor cells within the bone marrow. At the surface of bone marrow stromal cells, it contributes to the retention of the hematopoietic stem and progenitor cells expressing JAM3. Plays a central role in leukocytes extravasation by facilitating transmigration through the endothelium. Plays a role in spermatogenesis where JAM2 and JAM3, which are respectively expressed by Sertoli and germ cells, mediate an interaction between both cell types and play an essential role in the anchorage of germ cells onto Sertoli cells and the assembly of cell polarity complexes during spermatid differentiation. Also functions as a counter-receptor for ITGAM, mediating leukocyte-platelet interactions and is involved in the regulation of transepithelial migration of polymorphonuclear neutrophils (PMN). Plays a role in angiogenesis. Plays a role in the regulation of cell migration. During myogenesis, it is involved in myocyte fusion. Its function is as follows. Promotes chemotaxis of vascular endothelial cells and stimulates angiogenesis. The polypeptide is Junctional adhesion molecule C (JAM3) (Homo sapiens (Human)).